The following is a 307-amino-acid chain: tRNA dimethylallyltransferase 1 (307 aa).

G10–T17 serves as a coordination point for ATP. Residue T12–T17 participates in substrate binding. The segment at D35 to Q38 is interaction with substrate tRNA.

This sequence belongs to the IPP transferase family. Monomer. It depends on Mg(2+) as a cofactor.

It carries out the reaction adenosine(37) in tRNA + dimethylallyl diphosphate = N(6)-dimethylallyladenosine(37) in tRNA + diphosphate. Its function is as follows. Catalyzes the transfer of a dimethylallyl group onto the adenine at position 37 in tRNAs that read codons beginning with uridine, leading to the formation of N6-(dimethylallyl)adenosine (i(6)A). The protein is tRNA dimethylallyltransferase 1 of Geotalea daltonii (strain DSM 22248 / JCM 15807 / FRC-32) (Geobacter daltonii).